A 746-amino-acid polypeptide reads, in one-letter code: Protein zyg-11 homolog (746 aa).

LRR repeat units follow at residues 185 to 209, 216 to 241, and 265 to 289; these read LPRL…GLRS, MHQL…VLQH, and LPQL…AFVE.

Belongs to the zyg-11 family.

Functionally, serves as substrate adapter subunit in an E3 ubiquitin ligase complex zyg11-cul2-elongin BC. Targets substrates bearing N-terminal glycine degrons for proteasomal degradation. The polypeptide is Protein zyg-11 homolog (zyg11) (Danio rerio (Zebrafish)).